A 418-amino-acid chain; its full sequence is Tyrosine--tRNA ligase (418 aa).

Position 34 (Tyr-34) interacts with L-tyrosine. The short motif at 39–48 (PTADSLHLGH) is the 'HIGH' region element. The L-tyrosine site is built by Tyr-169 and Gln-173. Positions 229-233 (KFGKS) match the 'KMSKS' region motif. Lys-232 contacts ATP. The region spanning 352 to 418 (NNIVELLVSS…GKKKYFVLTY (67 aa)) is the S4 RNA-binding domain.

This sequence belongs to the class-I aminoacyl-tRNA synthetase family. TyrS type 1 subfamily. Homodimer.

Its subcellular location is the cytoplasm. It carries out the reaction tRNA(Tyr) + L-tyrosine + ATP = L-tyrosyl-tRNA(Tyr) + AMP + diphosphate + H(+). Functionally, catalyzes the attachment of tyrosine to tRNA(Tyr) in a two-step reaction: tyrosine is first activated by ATP to form Tyr-AMP and then transferred to the acceptor end of tRNA(Tyr). The protein is Tyrosine--tRNA ligase of Streptococcus pneumoniae (strain CGSP14).